A 1235-amino-acid chain; its full sequence is MPAGGRAGSLKDPDVAELFFKDDPEKLFSDLREIGHGSFGAVYFARDVRNSEVVAIKKMSYSGKQSNEKWQDIIKEVRFLQKLRHPNTIQYRGCYLREHTAWLVMEYCLGSASDLLEVHKKPLQEVEIAAVTHGALQGLAYLHSHNMIHRDVKAGNILLSEPGLVKLGDFGSASIMAPANSFVGTPYWMAPEVILAMDEGQYDGKVDVWSLGITCIELAERKPPLFNMNAMSALYHIAQNESPVLQSGHWSEYFRNFVDSCLQKIPQDRPTSEVLLKHRFVLRERPPTVIMDLIQRTKDAVRELDNLQYRKMKKILFQEAPNGPGAEAPEEEEEAEPYMHRAGTLTSLESSHSVPSMSISASSQSSSVNSLADASDNEEEEEEEEEEEEEEEGPEAREMAMMQEGEHTVTSHSSIIHRLPGSDNLYDDPYQPEITPSPLQPPAAPAPTSTTSSARRRAYCRNRDHFATIRTASLVSRQIQEHEQDSALREQLSGYKRMRRQHQKQLLALESRLRGEREEHSARLQRELEAQRAGFGAEAEKLARRHQAIGEKEARAAQAEERKFQQHILGQQKKELAALLEAQKRTYKLRKEQLKEELQENPSTPKREKAEWLLRQKEQLQQCQAEEEAGLLRRQRQYFELQCRQYKRKMLLARHSLDQDLLREDLNKKQTQKDLECALLLRQHEATRELELRQLQAVQRTRAELTRLQHQTELGNQLEYNKRREQELRQKHAAQVRQQPKSLKVRAGQRPPGLPLPIPGALGPPNTGTPIEQQPCSPGQEAVLDQRMLGEEEEAVGERRILGKEGATLEPKQQRILGEESGAPSPSPQKHGSLVDEEVWGLPEEIEELRVPSLVPQERSIVGQEEAGTWSLWGKEDESLLDEEFELGWVQGPALTPVPEEEEEEEEGAPIGTPRDPGDGCPSPDIPPEPPPTHLRPCPASQLPGLLSHGLLAGLSFAVGSSSGLLPLLLLLLLPLLAAQGGGGLQAALLALEVGLVGLGASYLLLCTALHLPSSLFLLLAQGTALGAVLGLSWRRGLMGVPLGLGAAWLLAWPGLALPLVAMAAGGRWVRQQGPRVRRGISRLWLRVLLRLSPMAFRALQGCGAVGDRGLFALYPKTNKDGFRSRLPVPGPRRRNPRTTQHPLALLARVWVLCKGWNWRLARASQGLASHLPPWAIHTLASWGLLRGERPTRIPRLLPRSQRQLGPPASRQPLPGTLAGRRSRTRQSRALPPWR.

Position 9 is a phosphoserine (S9). Residues 28 to 281 form the Protein kinase domain; it reads FSDLREIGHG…SEVLLKHRFV (254 aa). Residues 34-42 and K57 each bind ATP; that span reads IGHGSFGAV. The Proton acceptor role is filled by D151. A Phosphoserine modification is found at S181. The disordered stretch occupies residues 318–457; that stretch reads QEAPNGPGAE…TSTTSSARRR (140 aa). Residues 350–374 are compositionally biased toward low complexity; sequence SSHSVPSMSISASSQSSSVNSLADA. Residues 375 to 393 are compositionally biased toward acidic residues; sequence SDNEEEEEEEEEEEEEEEG. Basic and acidic residues predominate over residues 394-409; the sequence is PEAREMAMMQEGEHTV. S414 is subject to Phosphoserine. 2 coiled-coil regions span residues 486-547 and 574-601; these read SALR…RRHQ and KELA…LQEN. S656 carries the post-translational modification Phosphoserine. A coiled-coil region spans residues 681-713; sequence LRQHEATRELELRQLQAVQRTRAELTRLQHQTE. 3 disordered regions span residues 732 to 777, 804 to 835, and 891 to 939; these read HAAQ…QPCS, KEGA…GSLV, and QGPA…RPCP. Residues 766-777 show a composition bias toward polar residues; it reads NTGTPIEQQPCS. Phosphoserine occurs at positions 777, 825, and 827. Over residues 899 to 908 the composition is skewed to acidic residues; sequence PEEEEEEEEG. Residues 924–934 show a composition bias toward pro residues; it reads PDIPPEPPPTH. The next 2 helical transmembrane spans lie at 965–985 and 987–1007; these read LLPL…GGGL and AALL…LLLC. Residues H1011 and G1031 each carry the phosphoserine modification. Transmembrane regions (helical) follow at residues 1012-1032, 1043-1063, and 1166-1186; these read LPSS…VLGL, LGLG…LVAM, and QGLA…WGLL. Residues 1198–1235 form a disordered region; the sequence is LPRSQRQLGPPASRQPLPGTLAGRRSRTRQSRALPPWR.

The protein belongs to the protein kinase superfamily. STE Ser/Thr protein kinase family. STE20 subfamily. Interacts with MAP2K3 and MAP2K6. Self-associates. Interacts with tubulins through the C-terminal domain. Interacts with MAP3K7 and interferes with MAP3K7-binding to CHUK and thus prevents NF-kappa-B activation. Isoform 2 interacts with PCDH8; this complex may also include CDH2. It depends on Mg(2+) as a cofactor. Isoforms 1 and 2 are autophosphorylated. In terms of processing, C-terminal cleavage of isoform 1 and subsequent nuclear localization requires CASP9 activity. Post-translationally, autophosphorylated. Phosphorylated by ATM. Phosphorylated on Ser-1031 by MAPK14. This phosphorylation is required PCDH8 for endocytosis. In terms of tissue distribution, ubiquitously expressed, with a higher level of expression in testis and brain.

It localises to the cytoplasmic vesicle membrane. The protein localises to the cytoplasm. Its subcellular location is the cytoskeleton. It is found in the nucleus. The protein resides in the cell projection. It localises to the dendrite. The enzyme catalyses L-seryl-[protein] + ATP = O-phospho-L-seryl-[protein] + ADP + H(+). It carries out the reaction L-threonyl-[protein] + ATP = O-phospho-L-threonyl-[protein] + ADP + H(+). Its activity is regulated as follows. Selectively inhibited by the enantiopure organoruthenium inhibitor 9E1. Activated following arsenic trioxide (As(2)O(3)) treatment. In terms of biological role, serine/threonine-protein kinase involved in different processes such as membrane blebbing and apoptotic bodies formation DNA damage response and MAPK14/p38 MAPK stress-activated MAPK cascade. Phosphorylates itself, MBP, activated MAPK8, MAP2K3, MAP2K6 and tubulins. Activates the MAPK14/p38 MAPK signaling pathway through the specific activation and phosphorylation of the upstream MAP2K3 and MAP2K6 kinases. In response to DNA damage, involved in the G2/M transition DNA damage checkpoint by activating the p38/MAPK14 stress-activated MAPK cascade, probably by mediating phosphorylation of upstream MAP2K3 and MAP2K6 kinases. Isoform 1, but not isoform 2, plays a role in apoptotic morphological changes, including cell contraction, membrane blebbing and apoptotic bodies formation. This function, which requires the activation of MAPK8/JNK and nuclear localization of C-terminally truncated isoform 1, may be linked to the mitochondrial CASP9-associated death pathway. Isoform 1 binds to microtubules and affects their organization and stability independently of its kinase activity. Prevents MAP3K7-mediated activation of CHUK, and thus NF-kappa-B activation, but not that of MAPK8/JNK. May play a role in the osmotic stress-MAPK8 pathway. Isoform 2, but not isoform 1, is required for PCDH8 endocytosis. Following homophilic interactions between PCDH8 extracellular domains, isoform 2 phosphorylates and activates MAPK14/p38 MAPK which in turn phosphorylates isoform 2. This process leads to PCDH8 endocytosis and CDH2 cointernalization. Both isoforms are involved in MAPK14 phosphorylation. The chain is Serine/threonine-protein kinase TAO2 (TAOK2) from Homo sapiens (Human).